The primary structure comprises 431 residues: NADH-quinone oxidoreductase subunit D 2 (431 aa).

The tract at residues 1–37 (MSEAKGVGGIDPRATPGSAGAGERPPMGTLSPRAGEG) is disordered.

This sequence belongs to the complex I 49 kDa subunit family. NDH-1 is composed of 14 different subunits. Subunits NuoB, C, D, E, F, and G constitute the peripheral sector of the complex.

It is found in the cell inner membrane. The enzyme catalyses a quinone + NADH + 5 H(+)(in) = a quinol + NAD(+) + 4 H(+)(out). In terms of biological role, NDH-1 shuttles electrons from NADH, via FMN and iron-sulfur (Fe-S) centers, to quinones in the respiratory chain. The immediate electron acceptor for the enzyme in this species is believed to be ubiquinone. Couples the redox reaction to proton translocation (for every two electrons transferred, four hydrogen ions are translocated across the cytoplasmic membrane), and thus conserves the redox energy in a proton gradient. The protein is NADH-quinone oxidoreductase subunit D 2 of Anaeromyxobacter sp. (strain K).